The sequence spans 98 residues: NADH-ubiquinone oxidoreductase chain 4L (98 aa).

A run of 3 helical transmembrane segments spans residues 1 to 21, 29 to 49, and 61 to 81; these read MPVI…GLLI, SLLC…TLAL, and IILL…LVMV.

This sequence belongs to the complex I subunit 4L family. In terms of assembly, core subunit of respiratory chain NADH dehydrogenase (Complex I) which is composed of 45 different subunits.

The protein resides in the mitochondrion inner membrane. The catalysed reaction is a ubiquinone + NADH + 5 H(+)(in) = a ubiquinol + NAD(+) + 4 H(+)(out). Core subunit of the mitochondrial membrane respiratory chain NADH dehydrogenase (Complex I) which catalyzes electron transfer from NADH through the respiratory chain, using ubiquinone as an electron acceptor. Part of the enzyme membrane arm which is embedded in the lipid bilayer and involved in proton translocation. This chain is NADH-ubiquinone oxidoreductase chain 4L (MT-ND4L), found in Echinops telfairi (Lesser hedgehog tenrec).